We begin with the raw amino-acid sequence, 412 residues long: Multifunctional CCA protein (412 aa).

Residues Gly-8 and Arg-11 each coordinate ATP. Residues Gly-8 and Arg-11 each contribute to the CTP site. Residues Asp-21 and Asp-23 each contribute to the Mg(2+) site. Positions 91, 137, and 140 each coordinate ATP. CTP is bound by residues Arg-91, Arg-137, and Arg-140. One can recognise an HD domain in the interval 228–329; the sequence is TGIHTLMTLS…VKLFDSIDAW (102 aa).

The protein belongs to the tRNA nucleotidyltransferase/poly(A) polymerase family. Bacterial CCA-adding enzyme type 1 subfamily. Monomer. Can also form homodimers and oligomers. It depends on Mg(2+) as a cofactor. Ni(2+) serves as cofactor.

The catalysed reaction is a tRNA precursor + 2 CTP + ATP = a tRNA with a 3' CCA end + 3 diphosphate. The enzyme catalyses a tRNA with a 3' CCA end + 2 CTP + ATP = a tRNA with a 3' CCACCA end + 3 diphosphate. Catalyzes the addition and repair of the essential 3'-terminal CCA sequence in tRNAs without using a nucleic acid template. Adds these three nucleotides in the order of C, C, and A to the tRNA nucleotide-73, using CTP and ATP as substrates and producing inorganic pyrophosphate. tRNA 3'-terminal CCA addition is required both for tRNA processing and repair. Also involved in tRNA surveillance by mediating tandem CCA addition to generate a CCACCA at the 3' terminus of unstable tRNAs. While stable tRNAs receive only 3'-terminal CCA, unstable tRNAs are marked with CCACCA and rapidly degraded. In Shigella flexneri serotype 5b (strain 8401), this protein is Multifunctional CCA protein.